Reading from the N-terminus, the 418-residue chain is uncharacterized protein (418 aa).

Over residues E282 to R297 the composition is skewed to basic and acidic residues. The segment at E282–E346 is disordered. The segment covering S304–N316 has biased composition (low complexity). The segment covering W322–S337 has biased composition (polar residues).

This is an uncharacterized protein from Schizosaccharomyces pombe (strain 972 / ATCC 24843) (Fission yeast).